We begin with the raw amino-acid sequence, 102 residues long: uncharacterized protein (102 aa).

2 helical membrane passes run 38 to 58 and 64 to 84; these read FYVWSSRIYVLVLVVQAQLIL and VLFLLLFFLHNFFLLPQLFQF.

It is found in the membrane. This is an uncharacterized protein from Saccharomyces cerevisiae (strain ATCC 204508 / S288c) (Baker's yeast).